The following is a 453-amino-acid chain: Bifunctional protein GlmU (453 aa).

Residues 1–227 form a pyrophosphorylase region; it reads MTQLSVVILA…LMEVEGANNR (227 aa). Residues 9 to 12, Lys-23, Gln-74, 79 to 80, 101 to 103, Gly-138, Glu-152, Asn-167, and Asn-225 contribute to the UDP-N-acetyl-alpha-D-glucosamine site; these read LAAG, GT, and YGD. Asp-103 provides a ligand contact to Mg(2+). A Mg(2+)-binding site is contributed by Asn-225. The interval 228–248 is linker; sequence LQLAALERYYQKIQAEKLLLA. Positions 249-453 are N-acetyltransferase; it reads GVTIIDPARF…IQGWQRPTKK (205 aa). The UDP-N-acetyl-alpha-D-glucosamine site is built by Arg-331 and Lys-349. His-361 (proton acceptor) is an active-site residue. UDP-N-acetyl-alpha-D-glucosamine-binding residues include Tyr-364 and Asn-375. Acetyl-CoA is bound by residues Ala-378, 384-385, Ser-403, Ala-421, and Arg-438; that span reads NY.

The protein in the N-terminal section; belongs to the N-acetylglucosamine-1-phosphate uridyltransferase family. This sequence in the C-terminal section; belongs to the transferase hexapeptide repeat family. In terms of assembly, homotrimer. Mg(2+) is required as a cofactor.

It localises to the cytoplasm. It carries out the reaction alpha-D-glucosamine 1-phosphate + acetyl-CoA = N-acetyl-alpha-D-glucosamine 1-phosphate + CoA + H(+). It catalyses the reaction N-acetyl-alpha-D-glucosamine 1-phosphate + UTP + H(+) = UDP-N-acetyl-alpha-D-glucosamine + diphosphate. The protein operates within nucleotide-sugar biosynthesis; UDP-N-acetyl-alpha-D-glucosamine biosynthesis; N-acetyl-alpha-D-glucosamine 1-phosphate from alpha-D-glucosamine 6-phosphate (route II): step 2/2. It participates in nucleotide-sugar biosynthesis; UDP-N-acetyl-alpha-D-glucosamine biosynthesis; UDP-N-acetyl-alpha-D-glucosamine from N-acetyl-alpha-D-glucosamine 1-phosphate: step 1/1. Its pathway is bacterial outer membrane biogenesis; LPS lipid A biosynthesis. In terms of biological role, catalyzes the last two sequential reactions in the de novo biosynthetic pathway for UDP-N-acetylglucosamine (UDP-GlcNAc). The C-terminal domain catalyzes the transfer of acetyl group from acetyl coenzyme A to glucosamine-1-phosphate (GlcN-1-P) to produce N-acetylglucosamine-1-phosphate (GlcNAc-1-P), which is converted into UDP-GlcNAc by the transfer of uridine 5-monophosphate (from uridine 5-triphosphate), a reaction catalyzed by the N-terminal domain. The chain is Bifunctional protein GlmU from Glaesserella parasuis serovar 5 (strain SH0165) (Haemophilus parasuis).